The primary structure comprises 286 residues: Homoserine kinase (286 aa).

Position 78–88 (proline 78–serine 88) interacts with ATP.

The protein belongs to the GHMP kinase family. Homoserine kinase subfamily.

It is found in the cytoplasm. It catalyses the reaction L-homoserine + ATP = O-phospho-L-homoserine + ADP + H(+). It participates in amino-acid biosynthesis; L-threonine biosynthesis; L-threonine from L-aspartate: step 4/5. Its function is as follows. Catalyzes the ATP-dependent phosphorylation of L-homoserine to L-homoserine phosphate. The sequence is that of Homoserine kinase from Streptococcus suis (strain 98HAH33).